The following is a 261-amino-acid chain: Ribonuclease HII (261 aa).

One can recognise an RNase H type-2 domain in the interval 71–260 (HYIAGVDEVG…LHKYRHNTLL (190 aa)). A divalent metal cation contacts are provided by Asp-77, Glu-78, and Asp-169.

It belongs to the RNase HII family. It depends on Mn(2+) as a cofactor. Mg(2+) serves as cofactor.

The protein localises to the cytoplasm. The catalysed reaction is Endonucleolytic cleavage to 5'-phosphomonoester.. Its function is as follows. Endonuclease that specifically degrades the RNA of RNA-DNA hybrids. In Oceanobacillus iheyensis (strain DSM 14371 / CIP 107618 / JCM 11309 / KCTC 3954 / HTE831), this protein is Ribonuclease HII.